The chain runs to 329 residues: Adenylate isopentenyltransferase 7, mitochondrial (329 aa).

Residues 1–40 (MKFSISSLKQVQPILCFKNKLSKVNVNSFLHPKEKVIFVM) constitute a mitochondrion transit peptide. ATP is bound at residue 41–48 (GATGSGKS).

It belongs to the IPP transferase family. In terms of tissue distribution, expressed in both the vascular stele and the phloem companion cells of the root, in endodermis of the root elongation zone, trichomes on young leaves, and some pollen tubes.

It is found in the mitochondrion. It catalyses the reaction dimethylallyl diphosphate + ADP = N(6)-(dimethylallyl)adenosine 5'-diphosphate + diphosphate. The enzyme catalyses dimethylallyl diphosphate + ATP = N(6)-(dimethylallyl)adenosine 5'-triphosphate + diphosphate. Its function is as follows. Involved in cytokinin biosynthesis. Catalyzes the transfer of an isopentenyl group from dimethylallyl diphosphate (DMAPP) to ATP and ADP. In Arabidopsis thaliana (Mouse-ear cress), this protein is Adenylate isopentenyltransferase 7, mitochondrial (IPT7).